Consider the following 241-residue polypeptide: Glycerol-3-phosphate acyltransferase (241 aa).

Transmembrane regions (helical) follow at residues 3–23 (ILYS…LLGS), 63–83 (IVFA…SAIV), 97–117 (YISP…PAYY), 131–151 (LIIS…LLVV), 156–176 (IVSL…WMPW), and 198–218 (LVNY…LVLV).

Belongs to the PlsY family. Probably interacts with PlsX.

The protein resides in the cell membrane. It carries out the reaction an acyl phosphate + sn-glycerol 3-phosphate = a 1-acyl-sn-glycero-3-phosphate + phosphate. Its pathway is lipid metabolism; phospholipid metabolism. In terms of biological role, catalyzes the transfer of an acyl group from acyl-phosphate (acyl-PO(4)) to glycerol-3-phosphate (G3P) to form lysophosphatidic acid (LPA). This enzyme utilizes acyl-phosphate as fatty acyl donor, but not acyl-CoA or acyl-ACP. The chain is Glycerol-3-phosphate acyltransferase from Mycoplasmopsis agalactiae (strain NCTC 10123 / CIP 59.7 / PG2) (Mycoplasma agalactiae).